The primary structure comprises 183 residues: Ankyrin repeat domain-containing protein 39 (183 aa).

ANK repeat units lie at residues 30 to 59 (DFER…DPSQ), 63 to 92 (AGYT…KCDA), 96 to 125 (GGAT…NPRV), and 129 to 158 (DGMT…ALKA). Residue S153 is modified to Phosphoserine.

The protein belongs to the ANKRD39 family.

The protein is Ankyrin repeat domain-containing protein 39 (ANKRD39) of Homo sapiens (Human).